Reading from the N-terminus, the 491-residue chain is 3-epi-6-deoxocathasterone 23-monooxygenase CYP90D1 (491 aa).

A helical membrane pass occupies residues 7–27; sequence LLFFSFFFFIIIVIFNKINGL. Cysteine 442 is a heme binding site.

It belongs to the cytochrome P450 family. Heme is required as a cofactor. In terms of tissue distribution, expressed in leaf vascular tissue.

The protein resides in the endoplasmic reticulum membrane. It catalyses the reaction 3-epi-6-deoxocathasterone + reduced [NADPH--hemoprotein reductase] + O2 = 6-deoxotyphasterol + oxidized [NADPH--hemoprotein reductase] + H2O + H(+). It carries out the reaction (22S,24R)-22-hydroxy-5alpha-ergostan-3-one + reduced [NADPH--hemoprotein reductase] + O2 = 3-dehydro-6-deoxoteasterone + oxidized [NADPH--hemoprotein reductase] + H2O + H(+). The protein operates within plant hormone biosynthesis; brassinosteroid biosynthesis. Involved in brassinosteroid (BR) biosynthesis. May convert teasterone (TE) to 3-dehydroteasterone (3DT, 3-DHT), or 6-deoxoteasterone (6-deoxoTE) to 3-dehydro-6-deoxoteasterone (6-deoxo3DT, 6-deoxo3DHT). C-23 hydroxylase that converts directly (22S,24R)-22-hydroxy-5-alpha-ergostan-3-one and 3-epi-6-deoxocathasterone to 3-dehydro-6-deoxoteasterone (6-deoxo3DT, 6-deoxo3DHT) and 6-deoxotyphasterol (6-deoxoTY), respectively. These C-23 hydroxylation shortcuts bypass campestanol, 6-deoxocathasterone, and 6-deoxoteasterone (6-deoxoTE). Also catalyzes the conversion of cathasterone to teasterone (TE), 6-deoxotyphasterol (6-deoxoTY) to 6-deoxocathasterone (6-deoxoCT), (22S,24R)-22-hydroxyergost-4-en-3-one (22-OH-4-en-3-one) to (22R,23R)-22,23-dihydroxy-campest-4-en-3-one (22,23-diOH-4-en-3-one) and (22S)-22-hydroxycampesterol (22-OHCR) to (22R,23R)-22,23-dihydroxycampesterol (22,23-diOHCR). The polypeptide is 3-epi-6-deoxocathasterone 23-monooxygenase CYP90D1 (Arabidopsis thaliana (Mouse-ear cress)).